A 124-amino-acid polypeptide reads, in one-letter code: Fluoride-specific ion channel FluC (124 aa).

4 helical membrane passes run 1–21 (MIPL…LRFA), 38–58 (TLAV…LFLV), 69–89 (GLIV…LDTV), and 97–117 (VALA…ATWA). Residues Gly-76 and Thr-79 each contribute to the Na(+) site.

This sequence belongs to the fluoride channel Fluc/FEX (TC 1.A.43) family.

The protein resides in the cell inner membrane. It catalyses the reaction fluoride(in) = fluoride(out). Na(+) is not transported, but it plays an essential structural role and its presence is essential for fluoride channel function. Fluoride-specific ion channel. Important for reducing fluoride concentration in the cell, thus reducing its toxicity. The polypeptide is Fluoride-specific ion channel FluC (Pseudomonas fluorescens (strain ATCC BAA-477 / NRRL B-23932 / Pf-5)).